We begin with the raw amino-acid sequence, 245 residues long: Orotidine 5'-phosphate decarboxylase (245 aa).

Substrate contacts are provided by residues Asp22, Lys44, 71–80 (DLKFHDIPNT), Thr131, Arg192, Gln201, Gly221, and Arg222. The active-site Proton donor is Lys73.

It belongs to the OMP decarboxylase family. Type 1 subfamily. In terms of assembly, homodimer.

The catalysed reaction is orotidine 5'-phosphate + H(+) = UMP + CO2. It participates in pyrimidine metabolism; UMP biosynthesis via de novo pathway; UMP from orotate: step 2/2. Its function is as follows. Catalyzes the decarboxylation of orotidine 5'-monophosphate (OMP) to uridine 5'-monophosphate (UMP). In Escherichia coli O139:H28 (strain E24377A / ETEC), this protein is Orotidine 5'-phosphate decarboxylase.